The sequence spans 87 residues: UPF0250 protein YbeD (87 aa).

This sequence belongs to the UPF0250 family.

In Shigella boydii serotype 18 (strain CDC 3083-94 / BS512), this protein is UPF0250 protein YbeD.